The following is a 428-amino-acid chain: Histidinol dehydrogenase (428 aa).

Residues Tyr129, Gln188, and Asn211 each contribute to the NAD(+) site. Residues Ser234, Gln256, and His259 each coordinate substrate. Zn(2+)-binding residues include Gln256 and His259. Residues Glu323 and His324 each act as proton acceptor in the active site. The substrate site is built by His324, Asp357, Glu411, and His416. Asp357 lines the Zn(2+) pocket. Residue His416 coordinates Zn(2+).

Belongs to the histidinol dehydrogenase family. Zn(2+) serves as cofactor.

It catalyses the reaction L-histidinol + 2 NAD(+) + H2O = L-histidine + 2 NADH + 3 H(+). Its pathway is amino-acid biosynthesis; L-histidine biosynthesis; L-histidine from 5-phospho-alpha-D-ribose 1-diphosphate: step 9/9. Catalyzes the sequential NAD-dependent oxidations of L-histidinol to L-histidinaldehyde and then to L-histidine. This Caulobacter vibrioides (strain ATCC 19089 / CIP 103742 / CB 15) (Caulobacter crescentus) protein is Histidinol dehydrogenase.